Consider the following 328-residue polypeptide: Cytochrome c biogenesis protein CcsA (328 aa).

Transmembrane regions (helical) follow at residues 13 to 33, 46 to 66, 73 to 93, 101 to 121, 146 to 166, 234 to 254, 263 to 283, and 295 to 315; these read ISFSVISIVLTIYFLTLLVNL, GIVITFFGITGLLFTRWIYSG, LYESLIFLSWAFSIIHMVSYF, LNAITAPSAIFIQGFATSGLL, MILGYGALLCGSLLSMALLVI, IISLGFIFLTVGILSGAVWAN, WDPKETWAFITWTIFAIYLHI, and AIVASIGFILIWICYFGVNLL.

Belongs to the CcmF/CycK/Ccl1/NrfE/CcsA family. As to quaternary structure, may interact with Ccs1.

The protein resides in the plastid. Its subcellular location is the chloroplast thylakoid membrane. Required during biogenesis of c-type cytochromes (cytochrome c6 and cytochrome f) at the step of heme attachment. The sequence is that of Cytochrome c biogenesis protein CcsA from Nasturtium officinale (Watercress).